A 99-amino-acid polypeptide reads, in one-letter code: DNA-binding protein Fis (99 aa).

Positions 75-94 (QTRAALMLGVNRGTLRKKLK) form a DNA-binding region, H-T-H motif.

This sequence belongs to the transcriptional regulatory Fis family. As to quaternary structure, homodimer.

In terms of biological role, activates ribosomal RNA transcription. Plays a direct role in upstream activation of rRNA promoters. The chain is DNA-binding protein Fis from Actinobacillus succinogenes (strain ATCC 55618 / DSM 22257 / CCUG 43843 / 130Z).